Consider the following 98-residue polypeptide: Small ribosomal subunit protein bS18c (98 aa).

Positions 1–13 are enriched in basic and acidic residues; it reads MSKQSFDFKRYKP. The disordered stretch occupies residues 1-26; the sequence is MSKQSFDFKRYKPEAPSGSRKRPLKK.

Belongs to the bacterial ribosomal protein bS18 family. As to quaternary structure, part of the 30S ribosomal subunit.

The protein localises to the plastid. The protein resides in the chloroplast. This Gnetum parvifolium (Small-leaved jointfir) protein is Small ribosomal subunit protein bS18c.